Reading from the N-terminus, the 232-residue chain is Dephospho-CoA kinase (232 aa).

The DPCK domain maps to 3-206; the sequence is IVGLTGGIAS…RPLTWIEFWR (204 aa). Residue 8–15 coordinates ATP; that stretch reads GGIASGKS.

This sequence belongs to the CoaE family.

The protein resides in the peroxisome. The catalysed reaction is 3'-dephospho-CoA + ATP = ADP + CoA + H(+). Its pathway is cofactor biosynthesis; coenzyme A biosynthesis; CoA from (R)-pantothenate: step 5/5. In terms of biological role, catalyzes the phosphorylation of the 3'-hydroxyl group of dephosphocoenzyme A to form coenzyme A. This Arabidopsis thaliana (Mouse-ear cress) protein is Dephospho-CoA kinase.